The chain runs to 450 residues: Tyrosine-protein kinase CSK (450 aa).

Ser2 is subject to N-acetylserine. One can recognise an SH3 domain in the interval 9 to 70 (PSGTECIAKY…PANYVQKREG (62 aa)). Residues 9-70 (PSGTECIAKY…PANYVQKREG (62 aa)) are interaction with PTPN22. The 90-residue stretch at 82–171 (WFHGKITREQ…GLCTRLIKPK (90 aa)) folds into the SH2 domain. Position 184 is a phosphotyrosine (Tyr184). The region spanning 195-445 (LKLLQTIGKG…LREQLEHIRT (251 aa)) is the Protein kinase domain. Residues 201–209 (IGKGEFGDV) and Lys222 each bind ATP. The residue at position 304 (Tyr304) is a Phosphotyrosine. Residue Asp314 is the Proton acceptor of the active site. At Ser364 the chain carries Phosphoserine; by PKA. Residue Tyr416 is modified to Phosphotyrosine; by autocatalysis.

It belongs to the protein kinase superfamily. Tyr protein kinase family. CSK subfamily. As to quaternary structure, homodimer (via SH3-domain). Interacts with PTPN22. Interacts with phosphorylated SIT1, PAG1, LIME1 and TGFB1I1; these interactions serve to recruit CSK to the membrane where it can phosphorylate and inhibit Src-family kinases. Interacts with SRCIN1. Interacts with RHOH. Interacts (via SH2 domain) with SCIMP; this interaction is dependent on phosphorylation of SCIMP 'Tyr-96'. Interacts (via SH2 domain) with PRAG1 (when phosphorylated at 'Tyr-391'); this interaction prevents translocation of CSK from the cytoplasm to the membrane leading to increased activity of CSK. Interacts with LRRK1. Mn(2+) is required as a cofactor. The cofactor is Mg(2+). In terms of processing, phosphorylated at Ser-364 by PKA, leading to increased activity. Autophosphorylated. Enriched in lymphoid tissues.

Its subcellular location is the cytoplasm. It is found in the cell membrane. The catalysed reaction is L-tyrosyl-[protein] + ATP = O-phospho-L-tyrosyl-[protein] + ADP + H(+). Its function is as follows. Non-receptor tyrosine-protein kinase that plays an important role in the regulation of cell growth, differentiation, migration and immune response. Phosphorylates tyrosine residues located in the C-terminal tails of Src-family kinases (SFKs) including LCK, SRC, HCK, FYN, LYN, CSK or YES1. Upon tail phosphorylation, Src-family members engage in intramolecular interactions between the phosphotyrosine tail and the SH2 domain that result in an inactive conformation. To inhibit SFKs, CSK is recruited to the plasma membrane via binding to transmembrane proteins or adapter proteins located near the plasma membrane. Suppresses signaling by various surface receptors, including T-cell receptor (TCR) and B-cell receptor (BCR) by phosphorylating and maintaining inactive several positive effectors such as FYN or LCK. This Rattus norvegicus (Rat) protein is Tyrosine-protein kinase CSK (Csk).